We begin with the raw amino-acid sequence, 603 residues long: Elongation factor 4 (603 aa).

One can recognise a tr-type G domain in the interval Lys7 to Glu189. GTP contacts are provided by residues Asp19 to Thr24 and Asn136 to Asp139.

This sequence belongs to the TRAFAC class translation factor GTPase superfamily. Classic translation factor GTPase family. LepA subfamily.

It localises to the cell membrane. It catalyses the reaction GTP + H2O = GDP + phosphate + H(+). Its function is as follows. Required for accurate and efficient protein synthesis under certain stress conditions. May act as a fidelity factor of the translation reaction, by catalyzing a one-codon backward translocation of tRNAs on improperly translocated ribosomes. Back-translocation proceeds from a post-translocation (POST) complex to a pre-translocation (PRE) complex, thus giving elongation factor G a second chance to translocate the tRNAs correctly. Binds to ribosomes in a GTP-dependent manner. The polypeptide is Elongation factor 4 (Acetivibrio thermocellus (strain ATCC 27405 / DSM 1237 / JCM 9322 / NBRC 103400 / NCIMB 10682 / NRRL B-4536 / VPI 7372) (Clostridium thermocellum)).